Here is a 738-residue protein sequence, read N- to C-terminus: 1,4-alpha-glucan branching enzyme GlgB (738 aa).

D399 acts as the Nucleophile in catalysis. The active-site Proton donor is E452.

Belongs to the glycosyl hydrolase 13 family. GlgB subfamily. In terms of assembly, monomer.

The enzyme catalyses Transfers a segment of a (1-&gt;4)-alpha-D-glucan chain to a primary hydroxy group in a similar glucan chain.. It functions in the pathway glycan biosynthesis; glycogen biosynthesis. Catalyzes the formation of the alpha-1,6-glucosidic linkages in glycogen by scission of a 1,4-alpha-linked oligosaccharide from growing alpha-1,4-glucan chains and the subsequent attachment of the oligosaccharide to the alpha-1,6 position. The protein is 1,4-alpha-glucan branching enzyme GlgB of Chlamydia trachomatis serovar A (strain ATCC VR-571B / DSM 19440 / HAR-13).